Reading from the N-terminus, the 341-residue chain is L-amino acid-D/L-Glu epimerase (341 aa).

Residues Thr132 and 157 to 159 (KIK) each bind substrate. Residues Asp186, Glu212, and Asp237 each contribute to the Mg(2+) site. Residues Lys261 and 315–317 (DLD) each bind substrate.

Belongs to the mandelate racemase/muconate lactonizing enzyme family. Requires Mg(2+) as cofactor.

Its function is as follows. Catalyzes the epimerization of dipeptides with L-Glu in the second position. Has epimerase activity with L-Gly-L-Glu, L-Ala-L-Glu, L-Ser-L-Glu, L-Pro-L-Glu, L-Val-L-Glu, L-Met-L-Glu, L-Thr-L-Glu and L-Phe-L-Glu (in vitro). This chain is L-amino acid-D/L-Glu epimerase, found in Sulfurimonas denitrificans (strain ATCC 33889 / DSM 1251) (Thiomicrospira denitrificans (strain ATCC 33889 / DSM 1251)).